Here is a 356-residue protein sequence, read N- to C-terminus: Alanine racemase (356 aa).

The active-site Proton acceptor; specific for D-alanine is the lysine 35. Lysine 35 is modified (N6-(pyridoxal phosphate)lysine). Arginine 130 contacts substrate. Catalysis depends on tyrosine 253, which acts as the Proton acceptor; specific for L-alanine. Methionine 301 contacts substrate.

The protein belongs to the alanine racemase family. Pyridoxal 5'-phosphate serves as cofactor.

It catalyses the reaction L-alanine = D-alanine. The protein operates within amino-acid biosynthesis; D-alanine biosynthesis; D-alanine from L-alanine: step 1/1. Its function is as follows. Catalyzes the interconversion of L-alanine and D-alanine. May also act on other amino acids. This Erwinia tasmaniensis (strain DSM 17950 / CFBP 7177 / CIP 109463 / NCPPB 4357 / Et1/99) protein is Alanine racemase (alr).